Consider the following 377-residue polypeptide: tRNA N6-adenosine threonylcarbamoyltransferase (377 aa).

The Fe cation site is built by histidine 129 and histidine 133. Substrate-binding positions include leucine 151–glycine 155, aspartate 184, glycine 197, and asparagine 298. Aspartate 326 lines the Fe cation pocket. Residues aspartate 358–alanine 377 form a disordered region.

This sequence belongs to the KAE1 / TsaD family. It depends on Fe(2+) as a cofactor.

The protein localises to the cytoplasm. The enzyme catalyses L-threonylcarbamoyladenylate + adenosine(37) in tRNA = N(6)-L-threonylcarbamoyladenosine(37) in tRNA + AMP + H(+). In terms of biological role, required for the formation of a threonylcarbamoyl group on adenosine at position 37 (t(6)A37) in tRNAs that read codons beginning with adenine. Is involved in the transfer of the threonylcarbamoyl moiety of threonylcarbamoyl-AMP (TC-AMP) to the N6 group of A37, together with TsaE and TsaB. TsaD likely plays a direct catalytic role in this reaction. The sequence is that of tRNA N6-adenosine threonylcarbamoyltransferase from Maricaulis maris (strain MCS10) (Caulobacter maris).